Here is a 598-residue protein sequence, read N- to C-terminus: NADPH-dependent diflavin oxidoreductase 1 (598 aa).

The 145-residue stretch at 6-150 (LLVLFGSQTG…AIDPWVGDLW (145 aa)) folds into the Flavodoxin-like domain. FMN contacts are provided by residues 12 to 17 (SQTGTA), 59 to 62 (ATTG), 97 to 106 (LGDSSYAKFN), and Asp132. In terms of domain architecture, FAD-binding FR-type spans 206–448 (LQPFLAPVIT…VRPGSLVFPK (243 aa)). FAD-binding positions include Arg350, 382–385 (RAFS), and 416–419 (GLCS). NADP(+)-binding positions include Thr461, 516 to 517 (SR), 522 to 526 (KVYVQ), and Asp559. Trp597 is an FAD binding site.

This sequence belongs to the NADPH-dependent diflavin oxidoreductase NDOR1 family. The protein in the N-terminal section; belongs to the flavodoxin family. It in the C-terminal section; belongs to the flavoprotein pyridine nucleotide cytochrome reductase family. As to quaternary structure, interacts with CIAPIN1; as part of the cytosolic iron-sulfur (Fe-S) protein assembly (CIA) machinery. Interacts with DCPS. It depends on FAD as a cofactor. The cofactor is FMN.

It localises to the cytoplasm. The protein resides in the perinuclear region. It carries out the reaction 2 oxidized [2Fe-2S]-[protein] + NADPH = 2 reduced [2Fe-2S]-[protein] + NADP(+) + H(+). Its function is as follows. NADPH-dependent reductase which is a central component of the cytosolic iron-sulfur (Fe-S) protein assembly (CIA) machinery. Transfers electrons from NADPH via its FAD and FMN prosthetic groups to the [2Fe-2S] cluster of CIAPIN1, another key component of the CIA machinery. In turn, this reduced cluster provides electrons for assembly of cytosolic iron-sulfur cluster proteins. It can also reduce the [2Fe-2S] cluster of CISD1 and activate this protein implicated in Fe/S cluster repair. In vitro can fully activate methionine synthase/MTR in the presence of soluble cytochrome b5/CYB5A. In Mus musculus (Mouse), this protein is NADPH-dependent diflavin oxidoreductase 1.